Reading from the N-terminus, the 460-residue chain is 4-O-methyl-glucuronoyl methylesterase (460 aa).

A signal peptide spans 1–17 (MASRFFALLLLAIPIQA). Q18 carries the pyrrolidone carboxylic acid modification. In terms of domain architecture, CBM1 spans 18–53 (QSPVWGQCGGIGWSGPTTCVGGATCVSYNPYYSQCI). Intrachain disulfides connect C96-C131, C277-C412, and C309-C384. Residues 276–281 (GCSRNG) carry the GXSYXG catalytic site motif motif. S278 acts as the Nucleophile in catalysis. 4 residues coordinate substrate: K282, Q324, E332, and W375. The Proton donor/acceptor role is filled by H411. N447 carries N-linked (GlcNAc...) asparagine glycosylation.

The protein belongs to the carbohydrate esterase 15 (CE15) family.

The protein localises to the secreted. It carries out the reaction a 4-O-methyl-alpha-D-glucuronosyl ester derivative + H2O = 4-O-methyl-alpha-D-glucuronate derivative + an alcohol + H(+). In terms of biological role, glucuronoyl esterase which may play a significant role in biomass degradation, as it is considered to disconnect hemicellulose from lignin through the hydrolysis of the ester bond between 4-O-methyl-D-glucuronic acid residues of glucuronoxylans and aromatic alcohols of lignin. Does not hydrolyze substrates of other carbohydrate esterases such as acetylxylan esterase, acetyl esterase and feruloyl esterase. The polypeptide is 4-O-methyl-glucuronoyl methylesterase (Hypocrea jecorina (strain QM6a) (Trichoderma reesei)).